We begin with the raw amino-acid sequence, 458 residues long: tRNA modification GTPase MnmE (458 aa).

(6S)-5-formyl-5,6,7,8-tetrahydrofolate is bound by residues Arg-22, Glu-84, and Arg-123. Positions 220 to 379 (GIATAIIGRP…LEKAIADLFF (160 aa)) constitute a TrmE-type G domain. Asn-230 serves as a coordination point for K(+). GTP is bound by residues 230–235 (NVGKSS), 249–255 (TDIAGTT), and 274–277 (DTAG). Mg(2+) is bound at residue Ser-234. K(+) is bound by residues Thr-249, Ile-251, and Thr-254. Thr-255 serves as a coordination point for Mg(2+). Lys-458 contributes to the (6S)-5-formyl-5,6,7,8-tetrahydrofolate binding site.

The protein belongs to the TRAFAC class TrmE-Era-EngA-EngB-Septin-like GTPase superfamily. TrmE GTPase family. Homodimer. Heterotetramer of two MnmE and two MnmG subunits. It depends on K(+) as a cofactor.

The protein localises to the cytoplasm. Its function is as follows. Exhibits a very high intrinsic GTPase hydrolysis rate. Involved in the addition of a carboxymethylaminomethyl (cmnm) group at the wobble position (U34) of certain tRNAs, forming tRNA-cmnm(5)s(2)U34. This chain is tRNA modification GTPase MnmE, found in Bacillus thuringiensis (strain Al Hakam).